Reading from the N-terminus, the 125-residue chain is Small ribosomal subunit protein uS12 (125 aa).

The tract at residues 1–30 (MPTISQLVRKPRAAKPLKSKVPALGNSPQK) is disordered. A compositionally biased stretch (basic residues) spans 9–18 (RKPRAAKPLK). A 3-methylthioaspartic acid modification is found at Asp-89. The interval 103-125 (DTAGVKDRKQGRSKYGAKKPKSA) is disordered. The segment covering 113–125 (GRSKYGAKKPKSA) has biased composition (basic residues).

It belongs to the universal ribosomal protein uS12 family. Part of the 30S ribosomal subunit. Contacts proteins S8 and S17. May interact with IF1 in the 30S initiation complex.

Functionally, with S4 and S5 plays an important role in translational accuracy. Interacts with and stabilizes bases of the 16S rRNA that are involved in tRNA selection in the A site and with the mRNA backbone. Located at the interface of the 30S and 50S subunits, it traverses the body of the 30S subunit contacting proteins on the other side and probably holding the rRNA structure together. The combined cluster of proteins S8, S12 and S17 appears to hold together the shoulder and platform of the 30S subunit. This chain is Small ribosomal subunit protein uS12, found in Nitrosospira multiformis (strain ATCC 25196 / NCIMB 11849 / C 71).